The following is an 879-amino-acid chain: DNA mismatch repair protein MutS (879 aa).

Residue 629–636 coordinates ATP; the sequence is GPNMAGKS.

Belongs to the DNA mismatch repair MutS family.

This protein is involved in the repair of mismatches in DNA. It is possible that it carries out the mismatch recognition step. This protein has a weak ATPase activity. In Ruegeria sp. (strain TM1040) (Silicibacter sp.), this protein is DNA mismatch repair protein MutS.